The sequence spans 183 residues: Caspase recruitment domain-containing protein 19 (183 aa).

Cys7 and Cys77 are joined by a disulfide. Residues 8–99 (DRLVQDTPFL…PLHSHLPSRY (92 aa)) enclose the CARD domain. A helical transmembrane segment spans residues 122-142 (GPMSFLAGLGLAAGLALLLYC).

As to quaternary structure, associates with BCL10 by CARD-CARD interaction.

Its subcellular location is the endoplasmic reticulum membrane. The protein localises to the mitochondrion membrane. Plays a role in inhibiting the effects of BCL10-induced activation of NF-kappa-B. This is Caspase recruitment domain-containing protein 19 from Mus musculus (Mouse).